The following is a 467-amino-acid chain: Argininosuccinate lyase (467 aa).

It belongs to the lyase 1 family. Argininosuccinate lyase subfamily.

The protein resides in the cytoplasm. It carries out the reaction 2-(N(omega)-L-arginino)succinate = fumarate + L-arginine. It functions in the pathway amino-acid biosynthesis; L-arginine biosynthesis; L-arginine from L-ornithine and carbamoyl phosphate: step 3/3. The polypeptide is Argininosuccinate lyase (Allorhizobium ampelinum (strain ATCC BAA-846 / DSM 112012 / S4) (Agrobacterium vitis (strain S4))).